Reading from the N-terminus, the 145-residue chain is Ribonuclease HI (145 aa).

An RNase H type-1 domain is found at 1 to 142 (MNQTVYLYTD…ADDLANRGAA (142 aa)). Residues aspartate 10, glutamate 48, aspartate 70, and aspartate 134 each contribute to the Mg(2+) site.

It belongs to the RNase H family. In terms of assembly, monomer. Mg(2+) serves as cofactor.

The protein localises to the cytoplasm. The catalysed reaction is Endonucleolytic cleavage to 5'-phosphomonoester.. Functionally, endonuclease that specifically degrades the RNA of RNA-DNA hybrids. This is Ribonuclease HI from Neisseria meningitidis serogroup B (strain ATCC BAA-335 / MC58).